We begin with the raw amino-acid sequence, 95 residues long: Protein TusB (95 aa).

This sequence belongs to the DsrH/TusB family. Heterohexamer, formed by a dimer of trimers. The hexameric TusBCD complex contains 2 copies each of TusB, TusC and TusD. The TusBCD complex interacts with TusE.

Its subcellular location is the cytoplasm. Part of a sulfur-relay system required for 2-thiolation of 5-methylaminomethyl-2-thiouridine (mnm(5)s(2)U) at tRNA wobble positions. This Shigella flexneri protein is Protein TusB.